The following is a 617-amino-acid chain: Electron transfer flavoprotein-ubiquinone oxidoreductase, mitochondrial (617 aa).

The transit peptide at 1-33 (MMVPLAKLASPAYQCFHALKIKKNYLPLCATRW) directs the protein to the mitochondrion. FAD is bound at residue 75–80 (GAGPAG). The residue at position 96 (lysine 96) is an N6-acetyllysine. An intramembrane segment occupies 109 to 130 (IGAHTLSGACLDPRAFEELFPD). Residues lysine 132 and lysine 223 each carry the N6-acetyllysine modification. The a ubiquinone site is built by glycine 305 and glycine 306. At lysine 357 the chain carries N6-acetyllysine. An intramembrane segment occupies 428-447 (IGLHVTEYEDNLKNSWVWKE). At serine 551 the chain carries Phosphoserine. 4 residues coordinate [4Fe-4S] cluster: cysteine 561, cysteine 586, cysteine 589, and cysteine 592. One can recognise a 4Fe-4S ferredoxin-type domain in the interval 577–606 (FRLQINAQNCVHCKTCDIKDPSQNINWVVP).

As to quaternary structure, monomer. [4Fe-4S] cluster is required as a cofactor. Requires FAD as cofactor.

The protein localises to the mitochondrion inner membrane. The enzyme catalyses a ubiquinone + reduced [electron-transfer flavoprotein] = a ubiquinol + oxidized [electron-transfer flavoprotein] + H(+). In terms of biological role, accepts electrons from ETF and reduces ubiquinone. This Sus scrofa (Pig) protein is Electron transfer flavoprotein-ubiquinone oxidoreductase, mitochondrial (ETFDH).